A 572-amino-acid chain; its full sequence is Frizzled-7 (572 aa).

An N-terminal signal peptide occupies residues 1-32 (MRGPGTAASHSPLGLCALVLALLGALPTDTRA). Residues 33–254 (QPYHGEKGIS…EEERRFARLW (222 aa)) lie on the Extracellular side of the membrane. The FZ domain maps to 44 to 163 (PDHGFCQPIS…HGAGEICVGQ (120 aa)). 5 disulfide bridges follow: cysteine 49-cysteine 110, cysteine 57-cysteine 103, cysteine 94-cysteine 131, cysteine 120-cysteine 160, and cysteine 124-cysteine 148. The N-linked (GlcNAc...) asparagine glycan is linked to asparagine 63. N-linked (GlcNAc...) asparagine glycosylation is present at asparagine 164. The helical transmembrane segment at 255–275 (VGVWSVLCCASTLFTVLTYLV) threads the bilayer. At 276 to 286 (DMRRFSYPERP) the chain is on the cytoplasmic side. Residues 287 to 307 (IIFLSGCYFMVAVAHVAGFLL) form a helical membrane-spanning segment. Residues 308-334 (EDRAVCVERFSDDGYRTVAQGTKKEGC) are Extracellular-facing. The chain crosses the membrane as a helical span at residues 335–355 (TILFMVLYFFGMASSIWWVIL). Topologically, residues 356 to 377 (SLTWFLAAGMKWGHEAIEANSQ) are cytoplasmic. Residues 378-398 (YFHLAAWAVPAVKTITILAMG) traverse the membrane as a helical segment. Topologically, residues 399 to 421 (QVDGDLLSGVCYVGLSSVDALRG) are extracellular. Residues 422-442 (FVLAPLFVYLFIGTSFLLAGF) traverse the membrane as a helical segment. Over 443 to 468 (VSLFRIRTIMKHDGTKTEKLEKLMVR) the chain is Cytoplasmic. The chain crosses the membrane as a helical span at residues 469 to 489 (IGVFSVLYTVPATIVLACYFY). Over 490-526 (EQAFREHWERTWLLQTCKSYAVPCPPGHFSPMSPDFT) the chain is Extracellular. The chain crosses the membrane as a helical span at residues 527-547 (VFMIKYLMTMIVGITTGFWIW). The Cytoplasmic segment spans residues 548-572 (SGKTLQSWRRFYHRLSHSSKGETAV). The short motif at 550-555 (KTLQSW) is the Lys-Thr-X-X-X-Trp motif, mediates interaction with the PDZ domain of Dvl family members element. A PDZ-binding motif is present at residues 570-572 (TAV).

It belongs to the G-protein coupled receptor Fz/Smo family. As to quaternary structure, interacts with MAGI3. Interacts with DVL1. Interacts with CCDC88C/DAPLE; the interaction displaces DVL1 from FZD7, leading to inhibition of canonical Wnt signaling and triggering of non-canonical Wnt responses. Interacts with MYOC. Binds to SDCBP; this interaction is increased by inositol trisphosphate (IP3). Interacts with glypican GPC3. Ubiquitinated by ZNRF3, leading to its degradation by the proteasome.

The protein localises to the cell membrane. It is found in the endosome membrane. In terms of biological role, receptor for Wnt proteins. Most frizzled receptors are coupled to the beta-catenin canonical signaling pathway, which leads to the activation of disheveled proteins, inhibition of GSK-3 kinase, nuclear accumulation of beta-catenin and activation of Wnt target genes. A second signaling pathway involving PKC and calcium fluxes has been seen for some family members, but it is not yet clear if it represents a distinct pathway or if it can be integrated in the canonical pathway, as PKC seems to be required for Wnt-mediated inactivation of GSK-3 kinase. Both pathways seem to involve interactions with G-proteins. Activation by WNT8 induces expression of beta-catenin target genes. Following ligand activation, binds to CCDC88C/DAPLE which displaces DVL1 from FZD7 and leads to inhibition of canonical Wnt signaling, activation of G-proteins by CCDC88C and triggering of non-canonical Wnt responses. May be involved in transduction and intercellular transmission of polarity information during tissue morphogenesis and/or in differentiated tissues. This chain is Frizzled-7 (Fzd7), found in Mus musculus (Mouse).